The chain runs to 152 residues: Large ribosomal subunit protein uL22 (152 aa).

Positions 124-143 (APTKAASKKAAPAKQTTPAA) are enriched in low complexity. The disordered stretch occupies residues 124–152 (APTKAASKKAAPAKQTTPAATESKTEGAE).

The protein belongs to the universal ribosomal protein uL22 family. Part of the 50S ribosomal subunit.

Its function is as follows. This protein binds specifically to 23S rRNA; its binding is stimulated by other ribosomal proteins, e.g. L4, L17, and L20. It is important during the early stages of 50S assembly. It makes multiple contacts with different domains of the 23S rRNA in the assembled 50S subunit and ribosome. The globular domain of the protein is located near the polypeptide exit tunnel on the outside of the subunit, while an extended beta-hairpin is found that lines the wall of the exit tunnel in the center of the 70S ribosome. The polypeptide is Large ribosomal subunit protein uL22 (Salinispora arenicola (strain CNS-205)).